Here is a 91-residue protein sequence, read N- to C-terminus: MTKYIYIALVGVVVVLFGALRYQSSVIDELEITTKQQEDTNKSLSLALQQERNDEIERIATENAESVKTIIKTQPCAHTRLPQSVLDRLHE.

The chain crosses the membrane as a helical span at residues 7–23; the sequence is IALVGVVVVLFGALRYQ.

Its subcellular location is the membrane. This is an uncharacterized protein from Haemophilus influenzae (strain ATCC 51907 / DSM 11121 / KW20 / Rd).